Reading from the N-terminus, the 335-residue chain is ATP-dependent 6-phosphofructokinase (335 aa).

Position 11 (G11) interacts with ATP. Position 21–25 (21–25 (RAVVR)) interacts with ADP. ATP is bound by residues 72 to 73 (RY) and 102 to 105 (GDGS). Mg(2+) is bound at residue D103. 125–127 (TID) provides a ligand contact to substrate. The Proton acceptor role is filled by D127. An ADP-binding site is contributed by R154. Substrate-binding positions include R162 and 169–171 (MGR). ADP contacts are provided by residues 185–187 (GAD) and 213–215 (KKH). Substrate contacts are provided by residues E222, R244, and 250-253 (HIQR).

The protein belongs to the phosphofructokinase type A (PFKA) family. ATP-dependent PFK group I subfamily. Prokaryotic clade 'B1' sub-subfamily. As to quaternary structure, homotetramer. The cofactor is Mg(2+).

The protein resides in the cytoplasm. The catalysed reaction is beta-D-fructose 6-phosphate + ATP = beta-D-fructose 1,6-bisphosphate + ADP + H(+). Its pathway is carbohydrate degradation; glycolysis; D-glyceraldehyde 3-phosphate and glycerone phosphate from D-glucose: step 3/4. Allosterically activated by ADP and other diphosphonucleosides, and allosterically inhibited by phosphoenolpyruvate. Catalyzes the phosphorylation of D-fructose 6-phosphate to fructose 1,6-bisphosphate by ATP, the first committing step of glycolysis. The protein is ATP-dependent 6-phosphofructokinase of Streptococcus pneumoniae (strain ATCC BAA-255 / R6).